A 1820-amino-acid polypeptide reads, in one-letter code: Sodium channel protein (1820 aa).

Topologically, residues 1–117 (MARKFSSARP…FNPIRRGAIR (117 aa)) are cytoplasmic. Residues 108–410 (FNPIRRGAIR…VAMAYEEQNQ (303 aa)) form an I repeat. The helical transmembrane segment at 118–138 (VFVNSAFNFFIMFTIFSNCIF) threads the bilayer. At 139 to 149 (MTISNPPAWSK) the chain is on the extracellular side. Residues 150–171 (IVEYTFTGIYTFEVIVKVLSRG) form a helical membrane-spanning segment. The Cytoplasmic segment spans residues 172–176 (FCIGH). The helical transmembrane segment at 177-197 (FTFLRDPWNWLDFSVVTMTYI) threads the bilayer. Residues 198–203 (TEFIDL) are Extracellular-facing. Residues 204-224 (RNVSALRTFRVLRALKTITIF) traverse the membrane as a helical; Voltage-sensor segment. At 225 to 243 (PGLKTIVRALIESMKQMGD) the chain is on the cytoplasmic side. A helical membrane pass occupies residues 244-264 (VVILTVFSLAVFTLAGMQLFM). At 265-346 (GNLRHKCIRW…PNYGYTNYDN (82 aa)) the chain is on the extracellular side. Cysteine 271 and cysteine 324 form a disulfide bridge. Asparagine 278, asparagine 288, and asparagine 317 each carry an N-linked (GlcNAc...) asparagine glycan. The tract at residues 285-342 (SAYNTTFDFTAYIENEENQYFLDGALDALLCGNNSDAGKCPEGYTCMKAGRNPNYGYT) is non-homologous region of repeat I. Positions 347–371 (FAWTFLCLFRLMLQDYWENLYQMTL) form an intramembrane region, pore-forming. Residues 372 to 378 (RAAGKSY) lie on the Extracellular side of the membrane. A helical membrane pass occupies residues 379 to 402 (MVFFIMVIFLGSFYLINLILAVVA). Topologically, residues 403–557 (MAYEEQNQAT…CCGPWVFLKK (155 aa)) are cytoplasmic. Residues 483-507 (SVKLSTEEQRSDSKSMDSKHSVDKP) form a disordered region. The span at 487–507 (STEEQRSDSKSMDSKHSVDKP) shows a compositional bias: basic and acidic residues. The II repeat unit spans residues 548-811 (CCGPWVFLKK…EEDDEVNSLQ (264 aa)). A helical membrane pass occupies residues 558 to 578 (WVHFVMMDPFTDLFITLCIIL). The Extracellular segment spans residues 579–599 (NTLFMSIEHHPMNESFQSLLS). N-linked (GlcNAc...) asparagine glycosylation occurs at asparagine 591. Residues 600–620 (AGNLVFTTIFAAEMVLKIIAL) traverse the membrane as a helical segment. The Cytoplasmic portion of the chain corresponds to 621 to 625 (DPYYY). The chain crosses the membrane as a helical span at residues 626–643 (FQQTWNIFDSIIVSLSLL). The Extracellular segment spans residues 644 to 650 (ELGLSNM). A helical; Voltage-sensor membrane pass occupies residues 651–671 (QGMSVLRSLRLLRIFKLAKSW). Topologically, residues 672 to 690 (PTLNILIKIICNSVGALGN) are cytoplasmic. Residues 691–711 (LTIVLAIIVFIFALVGFQLFG) traverse the membrane as a helical segment. Residues 712 to 734 (KNYKEYVCKISDDCELPRWHMND) are Extracellular-facing. Residues 735 to 755 (FFHSFLIVFRALCGEWIETMW) constitute an intramembrane region (pore-forming). At 756 to 766 (DCMEVGGVPMC) the chain is on the extracellular side. Cysteine 757 and cysteine 766 are joined by a disulfide. A helical membrane pass occupies residues 767 to 790 (LAVYMMVIIIGNLVMLNLFLALLL). Residues 791–1004 (SSFSSDNLSS…TIVEHDYFET (214 aa)) lie on the Cytoplasmic side of the membrane. Disordered stretches follow at residues 844–864 (PPSDDVVGEEGDNEGKKDTLP) and 891–959 (VKGE…SKDP). A compositionally biased stretch (acidic residues) spans 896–910 (EIEEEGLVDSSDEED). Residues 924–935 (SVCSTVDYSPSE) show a composition bias toward polar residues. Residues 942-953 (EEEEEEEEEPEE) are compositionally biased toward acidic residues. An III repeat occupies 988–1295 (NLRRTCYTIV…KKYYNAMKKL (308 aa)). The chain crosses the membrane as a helical span at residues 1005–1025 (FIIFMILLSSGVLAFEDIYIW). The Extracellular segment spans residues 1026-1037 (RRRVIKVILEYA). A helical membrane pass occupies residues 1038–1058 (DKVFTYVFIVEMLLKWVAYGF). At 1059–1065 (KRYFTDA) the chain is on the cytoplasmic side. A helical transmembrane segment spans residues 1066-1086 (WCWLDFVIVGASIMGITSSLL). Topologically, residues 1087–1091 (GYEEL) are extracellular. A helical; Voltage-sensor transmembrane segment spans residues 1092–1112 (GAIKNLRTIRALRPLRALSRF). Over 1113 to 1131 (EGMKVVVRALLGAIPSIMN) the chain is Cytoplasmic. The chain crosses the membrane as a helical span at residues 1132–1152 (VLLVCLMFWLIFSIMGVNLFA). At 1153–1199 (GKFYRCINTTTDEILPVEEVNNRSDCMALMYTNEVRWVNLKVNYDNA) the chain is on the extracellular side. Asparagine 1160 and asparagine 1174 each carry an N-linked (GlcNAc...) asparagine glycan. The interval 1172 to 1194 (VNNRSDCMALMYTNEVRWVNLKV) is non-homologous region of repeat III. An intramembrane region (pore-forming) is located at residues 1200–1221 (GMGYLSLLQVSTFKGWMDIMYA). Over 1222 to 1243 (AVDSREVEDQPIYEINVYMYLY) the chain is Extracellular. Residues 1244-1264 (FVIFIVFGAFFTLNLFIGVII) traverse the membrane as a helical segment. Residues 1265–1320 (DNFNRQKQKLGGEDLFMTEEQKKYYNAMKKLGSKKAAKCIPRPSNVVQGVVYDIVT) are Cytoplasmic-facing. One copy of the IV repeat lies at 1304-1602 (IPRPSNVVQG…WHKFDVHGTQ (299 aa)). The helical transmembrane segment at 1321 to 1341 (QPFTDIFIMALICINMVAMMV) threads the bilayer. Over 1342–1352 (ESEDQSQVKKD) the chain is Extracellular. A helical transmembrane segment spans residues 1353-1376 (ILSQINVIFVIIFTVECLLKLLAL). The Cytoplasmic segment spans residues 1377–1380 (RQYF). Residues 1381-1398 (FTVGWNVFDFAVVVISII) traverse the membrane as a helical segment. Topologically, residues 1399–1416 (GLLLSDIIEKYFVSPTLF) are extracellular. A helical; Voltage-sensor membrane pass occupies residues 1417 to 1437 (RVIRLARIARVLRLIRAAKGI). The Cytoplasmic segment spans residues 1438-1453 (RTLLFALMMSLPALFN). Residues 1454-1474 (IGLLLFLIMFIFSIFGMSNFA) form a helical membrane-spanning segment. Over 1475-1490 (YVKKQGGVDDIFNFET) the chain is Extracellular. The tract at residues 1490-1505 (TFGNSMICLFEITTSA) is non-homologous region of repeat IV. Positions 1491 to 1513 (FGNSMICLFEITTSAGWDGLLLP) form an intramembrane region, pore-forming. Over 1514–1543 (TLNTGPPDCDPDVENPGTDVRGNCGNPGKG) the chain is Extracellular. A helical transmembrane segment spans residues 1544–1567 (ITFFCSYIILSFLVVVNMYIAIIL). Topologically, residues 1568-1820 (ENFGVAQEES…GAIVVRESIV (253 aa)) are cytoplasmic.

This sequence belongs to the sodium channel (TC 1.A.1.10) family.

It localises to the cell membrane. Mediates the voltage-dependent sodium ion permeability of excitable membranes. Assuming opened or closed conformations in response to the voltage difference across the membrane, the protein forms a sodium-selective channel through which Na(+) ions may pass in accordance with their electrochemical gradient. This Electrophorus electricus (Electric eel) protein is Sodium channel protein.